Consider the following 173-residue polypeptide: Endosomal/vacuolar adapter protein YPT35 (173 aa).

The PX domain maps to 40–173 (ERAFVTNCTI…LVIQFLRPRK (134 aa)).

It belongs to the YPT35 family.

It is found in the endosome membrane. The protein localises to the vacuole membrane. Its function is as follows. Recruits the lipid transfer protein VPS13 to endosomal and vacuolar membranes. This is Endosomal/vacuolar adapter protein YPT35 (YPT35) from Candida glabrata (strain ATCC 2001 / BCRC 20586 / JCM 3761 / NBRC 0622 / NRRL Y-65 / CBS 138) (Yeast).